A 63-amino-acid polypeptide reads, in one-letter code: U-reduvitoxin-Pr9a (63 aa).

The first 19 residues, 1–19, serve as a signal peptide directing secretion; sequence MRFFSLFTFLVAFIAAALA. A propeptide spanning residues 20–42 is cleaved from the precursor; the sequence is APVEIGEDLFALRPTGAKRDIIL. A disulfide bridge links Cys-47 with Cys-60.

In terms of tissue distribution, expressed by the venom gland.

The protein resides in the secreted. In Platymeris rhadamanthus (Red spot assassin bug), this protein is U-reduvitoxin-Pr9a.